We begin with the raw amino-acid sequence, 60 residues long: Cytotoxin 5 (60 aa).

4 disulfides stabilise this stretch: Cys3–Cys21, Cys14–Cys38, Cys42–Cys53, and Cys54–Cys59.

The protein belongs to the three-finger toxin family. Short-chain subfamily. Type IA cytotoxin sub-subfamily. As to quaternary structure, monomer in solution; Homodimer and oligomer in the presence of negatively charged lipids forming a pore with a size ranging between 20 and 30 Angstroms. Expressed by the venom gland.

Its subcellular location is the secreted. It localises to the target cell membrane. Functionally, shows cytolytic activity on many different cells by forming pore in lipid membranes. In vivo, increases heart rate or kills the animal by cardiac arrest. In addition, it binds to heparin with high affinity, interacts with Kv channel-interacting protein 1 (KCNIP1) in a calcium-independent manner, and binds to integrin alpha-V/beta-3 (ITGAV/ITGB3) with moderate affinity. The protein is Cytotoxin 5 of Naja annulifera (Banded Egyptian cobra).